Consider the following 602-residue polypeptide: Aspartate--tRNA(Asp/Asn) ligase (602 aa).

E176 provides a ligand contact to L-aspartate. An aspartate region spans residues 200-203 (QQFK). R222 and H452 together coordinate L-aspartate. An ATP-binding site is contributed by 222–224 (RDE). An ATP-binding site is contributed by E490. R497 lines the L-aspartate pocket. 542–545 (GIDR) serves as a coordination point for ATP.

It belongs to the class-II aminoacyl-tRNA synthetase family. Type 1 subfamily. As to quaternary structure, homodimer.

The protein resides in the cytoplasm. The catalysed reaction is tRNA(Asx) + L-aspartate + ATP = L-aspartyl-tRNA(Asx) + AMP + diphosphate. Aspartyl-tRNA synthetase with relaxed tRNA specificity since it is able to aspartylate not only its cognate tRNA(Asp) but also tRNA(Asn). Reaction proceeds in two steps: L-aspartate is first activated by ATP to form Asp-AMP and then transferred to the acceptor end of tRNA(Asp/Asn). This is Aspartate--tRNA(Asp/Asn) ligase from Rickettsia akari (strain Hartford).